We begin with the raw amino-acid sequence, 577 residues long: Hemagglutinin-neuraminidase (577 aa).

Blocked amino end (Met); by host is present on methionine 1. The Intravirion segment spans residues 1–26; the sequence is MDRAVSQVALENDEREAKNTWRLIFR. A helical transmembrane segment spans residues 27–48; the sequence is IAILLLTVVTLATSVASLVYSM. Residues 49–577 are Virion surface-facing; that stretch reads GASTPSDLVG…NDGVREARSG (529 aa). Asparagine 119 is a glycosylation site (N-linked (GlcNAc...) asparagine; by host). Residues 124-152 are important for interaction with fusion/F protein; it reads GAPIHDPDFIGGIGKELIVDDASDVTSFY. Intrachain disulfides connect cysteine 172/cysteine 196, cysteine 186/cysteine 247, and cysteine 238/cysteine 251. An involved in neuraminidase activity region spans residues 234–239; that stretch reads NRKSCS. Asparagine 341 and asparagine 433 each carry an N-linked (GlcNAc...) asparagine; by host glycan. 2 disulfides stabilise this stretch: cysteine 344–cysteine 461 and cysteine 455–cysteine 465. Residues asparagine 481 and asparagine 538 are each glycosylated (N-linked (GlcNAc...) asparagine; by host). Cysteine 531 and cysteine 542 are oxidised to a cystine.

Belongs to the paramyxoviruses hemagglutinin-neuraminidase family. In terms of assembly, homotetramer; composed of disulfide-linked homodimers. Interacts with F protein trimer. Interacts with host CG-1B; this interaction inhibits viral adsorption and replication rather than internalization.

It localises to the virion membrane. It is found in the host cell membrane. It carries out the reaction Hydrolysis of alpha-(2-&gt;3)-, alpha-(2-&gt;6)-, alpha-(2-&gt;8)- glycosidic linkages of terminal sialic acid residues in oligosaccharides, glycoproteins, glycolipids, colominic acid and synthetic substrates.. Its function is as follows. Mediates the viral entry into the host cell together with fusion/F protein. Attaches the virus to sialic acid-containing cell receptors and thereby initiates infection. Binding of HN protein to the receptor induces a conformational change that allows the F protein to trigger virion/cell membranes fusion. Functionally, neuraminidase activity ensures the efficient spread of the virus by dissociating the mature virions from the neuraminic acid containing glycoproteins. The chain is Hemagglutinin-neuraminidase (HN) from Gallus gallus (Chicken).